The chain runs to 156 residues: MTTTTEFPSATAKARFVRVSPTKARRVIDLVRGKSVNDAIDILRWAPQAASEPVAKVIASAAANAQNNDGLDPSTLVVSEIFADEGPTAKRIRPRAQGRAFRIRKRTSHITVVVESRPKQEKGGKAGASKASSRAARAQGSKAAAAKKTESKGGTS.

Positions 114–156 (VESRPKQEKGGKAGASKASSRAARAQGSKAAAAKKTESKGGTS) are disordered. Positions 127 to 146 (GASKASSRAARAQGSKAAAA) are enriched in low complexity. A compositionally biased stretch (basic and acidic residues) spans 147–156 (KKTESKGGTS).

This sequence belongs to the universal ribosomal protein uL22 family. As to quaternary structure, part of the 50S ribosomal subunit.

Functionally, this protein binds specifically to 23S rRNA; its binding is stimulated by other ribosomal proteins, e.g. L4, L17, and L20. It is important during the early stages of 50S assembly. It makes multiple contacts with different domains of the 23S rRNA in the assembled 50S subunit and ribosome. In terms of biological role, the globular domain of the protein is located near the polypeptide exit tunnel on the outside of the subunit, while an extended beta-hairpin is found that lines the wall of the exit tunnel in the center of the 70S ribosome. The protein is Large ribosomal subunit protein uL22 of Mycobacteroides abscessus (strain ATCC 19977 / DSM 44196 / CCUG 20993 / CIP 104536 / JCM 13569 / NCTC 13031 / TMC 1543 / L948) (Mycobacterium abscessus).